We begin with the raw amino-acid sequence, 545 residues long: Probable sucrose-6-phosphate hydrolase (545 aa).

Residues 107–110 (LLND), Gln-126, 169–170 (FS), 230–231 (RD), and Glu-285 each bind substrate. The active site involves Asp-110.

Belongs to the glycosyl hydrolase 32 family.

The protein resides in the cytoplasm. It catalyses the reaction Hydrolysis of terminal non-reducing beta-D-fructofuranoside residues in beta-D-fructofuranosides.. It participates in glycan biosynthesis; sucrose metabolism. Functionally, enables the bacterium to metabolize sucrose as a sole carbon source. This is Probable sucrose-6-phosphate hydrolase from Psychromonas ingrahamii (strain DSM 17664 / CCUG 51855 / 37).